A 160-amino-acid polypeptide reads, in one-letter code: SsrA-binding protein (160 aa).

The interval 133-160 (KKEHDKREDLKEREWQRDKERMMKNKGR) is disordered.

This sequence belongs to the SmpB family.

The protein localises to the cytoplasm. Required for rescue of stalled ribosomes mediated by trans-translation. Binds to transfer-messenger RNA (tmRNA), required for stable association of tmRNA with ribosomes. tmRNA and SmpB together mimic tRNA shape, replacing the anticodon stem-loop with SmpB. tmRNA is encoded by the ssrA gene; the 2 termini fold to resemble tRNA(Ala) and it encodes a 'tag peptide', a short internal open reading frame. During trans-translation Ala-aminoacylated tmRNA acts like a tRNA, entering the A-site of stalled ribosomes, displacing the stalled mRNA. The ribosome then switches to translate the ORF on the tmRNA; the nascent peptide is terminated with the 'tag peptide' encoded by the tmRNA and targeted for degradation. The ribosome is freed to recommence translation, which seems to be the essential function of trans-translation. The sequence is that of SsrA-binding protein from Tolumonas auensis (strain DSM 9187 / NBRC 110442 / TA 4).